The primary structure comprises 239 residues: Isoprenyl transferase (239 aa).

The active site involves Asp-16. Asp-16 contributes to the Mg(2+) binding site. Residues 17–20 (GNGR), Trp-21, Arg-29, His-33, and 61–63 (STE) each bind substrate. The active-site Proton acceptor is the Asn-64. Residues Trp-65, Arg-67, Arg-187, and 193–195 (RLS) each bind substrate. Glu-206 provides a ligand contact to Mg(2+).

This sequence belongs to the UPP synthase family. In terms of assembly, homodimer. Requires Mg(2+) as cofactor.

Catalyzes the condensation of isopentenyl diphosphate (IPP) with allylic pyrophosphates generating different type of terpenoids. This chain is Isoprenyl transferase, found in Lactobacillus johnsonii (strain CNCM I-12250 / La1 / NCC 533).